Here is a 130-residue protein sequence, read N- to C-terminus: Small ribosomal subunit protein uS11 (130 aa).

It belongs to the universal ribosomal protein uS11 family. As to quaternary structure, part of the 30S ribosomal subunit. Interacts with proteins S7 and S18. Binds to IF-3.

Functionally, located on the platform of the 30S subunit, it bridges several disparate RNA helices of the 16S rRNA. Forms part of the Shine-Dalgarno cleft in the 70S ribosome. In Prochlorococcus marinus subsp. pastoris (strain CCMP1986 / NIES-2087 / MED4), this protein is Small ribosomal subunit protein uS11.